The following is a 137-amino-acid chain: Methylglyoxal synthase (137 aa).

The MGS-like domain occupies 1 to 137; that stretch reads MNIALVAHDQ…EVRKSKSQRI (137 aa). Residues H8, K12, 34-37, and 54-55 each bind substrate; these read TGTT and SG. The Proton donor/acceptor role is filled by D60. Residue H87 coordinates substrate.

Belongs to the methylglyoxal synthase family.

It carries out the reaction dihydroxyacetone phosphate = methylglyoxal + phosphate. In terms of biological role, catalyzes the formation of methylglyoxal from dihydroxyacetone phosphate. In Clostridioides difficile (strain 630) (Peptoclostridium difficile), this protein is Methylglyoxal synthase.